A 96-amino-acid polypeptide reads, in one-letter code: MASEEIIREVYKVLEERRDNPIDSYTSKIMQDSDKKAEDKILEKVAEECGEVLLAAKNDENLVYESVDLIFHTLLILVYKGIEIDEIFEEFARRRH.

This sequence belongs to the PRA-PH family.

It localises to the cytoplasm. It catalyses the reaction 1-(5-phospho-beta-D-ribosyl)-ATP + H2O = 1-(5-phospho-beta-D-ribosyl)-5'-AMP + diphosphate + H(+). It functions in the pathway amino-acid biosynthesis; L-histidine biosynthesis; L-histidine from 5-phospho-alpha-D-ribose 1-diphosphate: step 2/9. The protein is Phosphoribosyl-ATP pyrophosphatase of Methanobrevibacter smithii (strain ATCC 35061 / DSM 861 / OCM 144 / PS).